Consider the following 137-residue polypeptide: Thioredoxin-like protein R548 (137 aa).

One can recognise a Thioredoxin domain in the interval 2-137 (SKDSVETNTI…LEKSIVESSQ (136 aa)). Active-site nucleophile residues include cysteine 61 and cysteine 64. Residues cysteine 61 and cysteine 64 are joined by a disulfide bond.

Belongs to the thioredoxin family.

In terms of biological role, participates in various redox reactions through the reversible oxidation of its active center dithiol to a disulfide and catalyzes dithiol-disulfide exchange reactions. The sequence is that of Thioredoxin-like protein R548 from Acanthamoeba polyphaga mimivirus (APMV).